We begin with the raw amino-acid sequence, 161 residues long: 2-C-methyl-D-erythritol 2,4-cyclodiphosphate synthase (161 aa).

Residues Asp-10 and His-12 each contribute to the a divalent metal cation site. 4-CDP-2-C-methyl-D-erythritol 2-phosphate-binding positions include 10 to 12 and 36 to 37; these read DVH and HS. Residue His-44 participates in a divalent metal cation binding. 4-CDP-2-C-methyl-D-erythritol 2-phosphate is bound by residues 58 to 60, 63 to 67, and Arg-144; these read DIG and FSDTD.

Belongs to the IspF family. In terms of assembly, homotrimer. It depends on a divalent metal cation as a cofactor.

The enzyme catalyses 4-CDP-2-C-methyl-D-erythritol 2-phosphate = 2-C-methyl-D-erythritol 2,4-cyclic diphosphate + CMP. Its pathway is isoprenoid biosynthesis; isopentenyl diphosphate biosynthesis via DXP pathway; isopentenyl diphosphate from 1-deoxy-D-xylulose 5-phosphate: step 4/6. Involved in the biosynthesis of isopentenyl diphosphate (IPP) and dimethylallyl diphosphate (DMAPP), two major building blocks of isoprenoid compounds. Catalyzes the conversion of 4-diphosphocytidyl-2-C-methyl-D-erythritol 2-phosphate (CDP-ME2P) to 2-C-methyl-D-erythritol 2,4-cyclodiphosphate (ME-CPP) with a corresponding release of cytidine 5-monophosphate (CMP). The polypeptide is 2-C-methyl-D-erythritol 2,4-cyclodiphosphate synthase (Burkholderia ambifaria (strain MC40-6)).